The chain runs to 130 residues: Glycine cleavage system H protein (130 aa).

In terms of domain architecture, Lipoyl-binding spans 24–106 (EYTVGITEHA…YHEGWLFRIK (83 aa)). Position 65 is an N6-lipoyllysine (Lys65).

Belongs to the GcvH family. The glycine cleavage system is composed of four proteins: P, T, L and H. Requires (R)-lipoate as cofactor.

In terms of biological role, the glycine cleavage system catalyzes the degradation of glycine. The H protein shuttles the methylamine group of glycine from the P protein to the T protein. This chain is Glycine cleavage system H protein, found in Photorhabdus laumondii subsp. laumondii (strain DSM 15139 / CIP 105565 / TT01) (Photorhabdus luminescens subsp. laumondii).